A 299-amino-acid chain; its full sequence is MSYGFVAYNLPKVQGTYRRGVKMHNATWFNVGGVAEVVFKPSSVEDLAAFVRDTNLPISVVGVASNLIVRDGIVKGVVVKLGREFSYINCNGNIITAGCATLLSNLAVAAQESGISGLEFFVGIPGTVGGAIEMNAGAYGGDVASVLRSVRAVNEHGEICTLSNDDMRYSYREHGLVGKWIFVDATFVGACGDRDAIKGTMREFIARRNDSQPVRGRTGGSTFKNPEGHQAWELIDKAGCRGLQIGGAQVSEKHCNFLLNCGGATAKDLEDLGNEIRCRVHSMFGIKLEWEIRFLGCGL.

The region spanning 31–192 (VGGVAEVVFK…VDATFVGACG (162 aa)) is the FAD-binding PCMH-type domain. Arg-172 is a catalytic residue. Ser-221 acts as the Proton donor in catalysis. Glu-291 is a catalytic residue.

It belongs to the MurB family. FAD serves as cofactor.

The protein resides in the cytoplasm. It carries out the reaction UDP-N-acetyl-alpha-D-muramate + NADP(+) = UDP-N-acetyl-3-O-(1-carboxyvinyl)-alpha-D-glucosamine + NADPH + H(+). The protein operates within cell wall biogenesis; peptidoglycan biosynthesis. Cell wall formation. This Anaplasma marginale (strain St. Maries) protein is UDP-N-acetylenolpyruvoylglucosamine reductase.